Consider the following 338-residue polypeptide: Lipoate-protein ligase A (338 aa).

In terms of domain architecture, BPL/LPL catalytic spans 29–216 (PATQRVLFLW…AFFAHYGERV (188 aa)). ATP is bound by residues arginine 71, 76–79 (GAVF), and lysine 134. Lysine 134 contacts (R)-lipoate.

Belongs to the LplA family. Monomer.

It localises to the cytoplasm. The catalysed reaction is L-lysyl-[lipoyl-carrier protein] + (R)-lipoate + ATP = N(6)-[(R)-lipoyl]-L-lysyl-[lipoyl-carrier protein] + AMP + diphosphate + H(+). It participates in protein modification; protein lipoylation via exogenous pathway; protein N(6)-(lipoyl)lysine from lipoate: step 1/2. It functions in the pathway protein modification; protein lipoylation via exogenous pathway; protein N(6)-(lipoyl)lysine from lipoate: step 2/2. Its function is as follows. Catalyzes both the ATP-dependent activation of exogenously supplied lipoate to lipoyl-AMP and the transfer of the activated lipoyl onto the lipoyl domains of lipoate-dependent enzymes. This Escherichia fergusonii (strain ATCC 35469 / DSM 13698 / CCUG 18766 / IAM 14443 / JCM 21226 / LMG 7866 / NBRC 102419 / NCTC 12128 / CDC 0568-73) protein is Lipoate-protein ligase A.